The chain runs to 542 residues: Major facilitator superfamily transporter mfsA (542 aa).

Transmembrane regions (helical) follow at residues 19–39, 70–90, 99–119, 127–149, 160–180, 194–214, 321–341, 349–369, 380–400, 413–432, and 444–464; these read FAAV…AGLL, GAVT…SMFC, LIFM…VCYT, FVIG…PVWQ, FLVC…YWVV, FPVA…LMLP, IMGG…FFMI, LYLI…ACLI, AVGI…LPWI, VGAS…VVMF, and VYLF…FFYV.

Belongs to the major facilitator superfamily. Sugar transporter (TC 2.A.1.1) family.

It localises to the membrane. Its function is as follows. Major facilitator superfamily transporter that may be involved in A.fumigatus adaptation to azoles such as vorizonazole. This Aspergillus fumigatus (strain ATCC MYA-4609 / CBS 101355 / FGSC A1100 / Af293) (Neosartorya fumigata) protein is Major facilitator superfamily transporter mfsA.